We begin with the raw amino-acid sequence, 189 residues long: uncharacterized protein (189 aa).

Residues 9–69 (ADTGGRILRA…SMLTSHIAAV (61 aa)) form the HTH tetR-type domain. A DNA-binding region (H-T-H motif) is located at residues 32 to 51 (TLAEIARRAGVSRPTVYRRW).

This is an uncharacterized protein from Mycobacterium bovis (strain ATCC BAA-935 / AF2122/97).